Consider the following 101-residue polypeptide: Therostasin (101 aa).

Positions 1 to 19 are cleaved as a signal peptide; the sequence is MRGLAVLLLVACFCSVAFG. 2 consecutive Antistasin-like domains span residues 21-46 and 49-75; these read CENT…TCLC and CNDA…FCTC.

In terms of tissue distribution, salivary glands.

The protein localises to the secreted. In terms of biological role, potent inhibitor of factor Xa. It also inhibits trypsin in a weaker manner. The chain is Therostasin from Theromyzon tessulatum (Duck leech).